Consider the following 167-residue polypeptide: MSRSQKNDNFIDKTFTILADLILKFLPTNINAKKAFSYYRDGMSAQSEGEYAEALANYYEALNLEEDPYDKSFILYNIGLIHASNGEYVKALDYYHKALEANNKLPQALNNIAVIYHYQAVKASEINDLETAQALFHEAAQYWKQAIKLAPSNYIEAQNWLLSTGRL.

TPR repeat units lie at residues 35-68 (AFSY…EEDP), 72-105 (SFIL…NNKL), and 120-153 (AVKA…APSN).

The protein belongs to the Ycf3 family.

It localises to the plastid. It is found in the chloroplast thylakoid membrane. Its function is as follows. Essential for the assembly of the photosystem I (PSI) complex. May act as a chaperone-like factor to guide the assembly of the PSI subunits. The sequence is that of Photosystem I assembly protein Ycf3 from Galdieria sulphuraria (Red alga).